A 300-amino-acid chain; its full sequence is uncharacterized protein (300 aa).

Ser-49 serves as the catalytic Charge relay system. The Proton donor role is filled by Tyr-137. The Schiff-base intermediate with substrate role is filled by Lys-165.

Belongs to the DapA family. In terms of assembly, homotetramer.

It localises to the cytoplasm. Upon expression in E.coli complements a dapA deletion mutation, but this may not be its physiological function. This is an uncharacterized protein from Rhizobium meliloti (Ensifer meliloti).